Here is a 445-residue protein sequence, read N- to C-terminus: Branched-chain amino acid permease BraB (445 aa).

Transmembrane regions (helical) follow at residues 11–31, 45–65, 79–99, 122–142, 158–178, 192–212, 233–253, 275–295, 311–331, 339–359, 375–395, and 415–435; these read IIIG…IYPP, IGGF…AIAL, PVFG…LFAI, LSLL…ALNP, FTII…GLGA, FLEG…VVVV, AGVI…YLGA, YLFG…ACLT, LIPA…SLII, IIAF…VIIV, IACL…AAGF, and IGWV…TLFI.

Belongs to the branched chain amino acid transporter family.

The protein localises to the cell membrane. Its function is as follows. Branched-chain amino acid transport system which is involved in the uptake of isoleucine, valine and probably leucine. Together with BcaP and BrnQ, plays an important role in the activation of CodY, a branched-chain amino acid-responsive transcriptional regulator that controls the expression of several dozen transcription units in B.subtilis. The polypeptide is Branched-chain amino acid permease BraB (Bacillus subtilis (strain 168)).